The primary structure comprises 82 residues: UPF0437 protein in nifX-nifW intergenic region (82 aa).

It belongs to the UPF0437 family.

The sequence is that of UPF0437 protein in nifX-nifW intergenic region from Frankia alni.